A 78-amino-acid polypeptide reads, in one-letter code: DNA-directed RNA polymerase subunit omega (78 aa).

Belongs to the RNA polymerase subunit omega family. In terms of assembly, in cyanobacteria the RNAP catalytic core is composed of 2 alpha, 1 beta, 1 beta', 1 gamma and 1 omega subunit. When a sigma factor is associated with the core the holoenzyme is formed, which can initiate transcription.

The enzyme catalyses RNA(n) + a ribonucleoside 5'-triphosphate = RNA(n+1) + diphosphate. Promotes RNA polymerase assembly. Latches the N- and C-terminal regions of the beta' subunit thereby facilitating its interaction with the beta and alpha subunits. This is DNA-directed RNA polymerase subunit omega from Prochlorococcus marinus (strain AS9601).